A 318-amino-acid chain; its full sequence is NADH-ubiquinone oxidoreductase chain 1 (318 aa).

8 helical membrane passes run 2–22, 76–96, 98–118, 140–160, 171–191, 217–237, 253–273, and 294–314; these read FMVNLLLLIIPALIAMAFLTL, TLALSIALLMWSPLPMPHPLI, FNLGLLFMLATSSLAVYSILW, ISYEVTLAIILLSTLLMSGSF, HSWLLLPSWPMAMMWFTSTLA, AGSFALFFMAEYMNIIMMNAL, ELYTMNFMTKTLLLTTLFLWI, and LPLTLALCMWYISMPALTSGI.

Belongs to the complex I subunit 1 family. Core subunit of respiratory chain NADH dehydrogenase (Complex I) which is composed of 45 different subunits.

The protein resides in the mitochondrion inner membrane. It carries out the reaction a ubiquinone + NADH + 5 H(+)(in) = a ubiquinol + NAD(+) + 4 H(+)(out). Core subunit of the mitochondrial membrane respiratory chain NADH dehydrogenase (Complex I) which catalyzes electron transfer from NADH through the respiratory chain, using ubiquinone as an electron acceptor. Essential for the catalytic activity and assembly of complex I. This chain is NADH-ubiquinone oxidoreductase chain 1 (MT-ND1), found in Ateles paniscus (Black spider monkey).